Consider the following 710-residue polypeptide: U3 small nucleolar RNA-associated protein 4 (710 aa).

WD repeat units follow at residues Tyr11 to Thr59, Gly64 to Asn105, Ser108 to Glu147, Arg154 to Ile192, Arg199 to Ser241, Phe290 to Asn327, Arg328 to Ile365, Ser488 to Leu527, and Arg529 to Trp569.

Component of the ribosomal small subunit (SSU) processome.

Its subcellular location is the nucleus. It is found in the nucleolus. In terms of biological role, involved in nucleolar processing of pre-18S ribosomal RNA. Required for optimal pre-ribosomal RNA transcription by RNA polymerase I together with a subset of U3 proteins required for transcription (t-UTPs). This is U3 small nucleolar RNA-associated protein 4 (utp4) from Schizosaccharomyces pombe (strain 972 / ATCC 24843) (Fission yeast).